Reading from the N-terminus, the 303-residue chain is 1-acyl-sn-glycerol-3-phosphate acyltransferase (303 aa).

The short motif at 82–87 is the HXXXXD motif element; the sequence is HQSTLD. Positions 278-303 are disordered; that stretch reads NEPVPSVSISNDVNTHNEGSSVKKMH. Polar residues predominate over residues 284 to 297; it reads VSISNDVNTHNEGS.

The protein belongs to the 1-acyl-sn-glycerol-3-phosphate acyltransferase family.

The protein localises to the lipid droplet. It carries out the reaction a 1-acyl-sn-glycero-3-phosphate + an acyl-CoA = a 1,2-diacyl-sn-glycero-3-phosphate + CoA. The catalysed reaction is a 1-acyl-sn-glycero-3-phosphocholine + an acyl-CoA = a 1,2-diacyl-sn-glycero-3-phosphocholine + CoA. It catalyses the reaction a 1-acyl-sn-glycero-3-phosphoethanolamine + an acyl-CoA = a 1,2-diacyl-sn-glycero-3-phosphoethanolamine + CoA. The enzyme catalyses 1-hexadecanoyl-sn-glycero-3-phosphate + (9Z)-octadecenoyl-CoA = 1-hexadecanoyl-2-(9Z-octadecenoyl)-sn-glycero-3-phosphate + CoA. It carries out the reaction 1-octadecanoyl-sn-glycero-3-phosphate + (9Z)-octadecenoyl-CoA = 1-octadecanoyl-2-(9Z-octadecenoyl)-sn-glycero-3-phosphate + CoA. The catalysed reaction is 1-(9Z-octadecenoyl)-sn-glycero-3-phospho-L-serine + (9Z)-octadecenoyl-CoA = 1,2-di-(9Z)-octadecenoyl-sn-glycero-3-phospho-L-serine + CoA. It catalyses the reaction a 1-acyl-sn-glycero-3-phospho-(1D-myo-inositol) + (9Z)-octadecenoyl-CoA = a 1-acyl-2-(9Z-octadecenoyl)-sn-glycero-3-phospho-(1D-myo-inositol) + CoA. The enzyme catalyses 1-heptadecanoyl-sn-glycero-3-phosphate + (9Z)-octadecenoyl-CoA = 1-heptadecanoyl-2-(9Z)-octadecenoyl-sn-glycero-3-phosphate + CoA. It carries out the reaction 1-heptadecanoyl-sn-glycero-3-phosphate + dodecanoyl-CoA = 1-heptadecanoyl-2-dodecanoyl-sn-glycero-3-phosphate + CoA. The catalysed reaction is 1-heptadecanoyl-sn-glycero-3-phosphate + tetradecanoyl-CoA = 1-heptadecanoyl-2-tetradecanoyl-sn-glycero-3-phosphate + CoA. It functions in the pathway phospholipid metabolism; CDP-diacylglycerol biosynthesis; CDP-diacylglycerol from sn-glycerol 3-phosphate: step 2/3. Its function is as follows. Acyltransferase that catalyzes the sn-2-specific, acyl-CoA-dependent acylation of lysophosphatidic acid (LPA) to phosphatidic acid (PA) in lipid particles. Together with ALE1, plays a central role in PA biosynthesis. PA is the intermediate, from which all glycerophospholipids are synthesized. Can also acylate lysophosphoinositol (LPI) and lysophosphoserine (LPS). The fatty acyl substrates include 18:1-acyl-CoA, 14:0-acyl-CoA, 12:0-acyl-CoA and 10:0-acyl-CoA. This chain is 1-acyl-sn-glycerol-3-phosphate acyltransferase, found in Saccharomyces cerevisiae (strain ATCC 204508 / S288c) (Baker's yeast).